We begin with the raw amino-acid sequence, 275 residues long: 2,3,4,5-tetrahydropyridine-2,6-dicarboxylate N-succinyltransferase (275 aa).

Belongs to the transferase hexapeptide repeat family.

The protein resides in the cytoplasm. The catalysed reaction is (S)-2,3,4,5-tetrahydrodipicolinate + succinyl-CoA + H2O = (S)-2-succinylamino-6-oxoheptanedioate + CoA. It functions in the pathway amino-acid biosynthesis; L-lysine biosynthesis via DAP pathway; LL-2,6-diaminopimelate from (S)-tetrahydrodipicolinate (succinylase route): step 1/3. The protein is 2,3,4,5-tetrahydropyridine-2,6-dicarboxylate N-succinyltransferase of Burkholderia ambifaria (strain MC40-6).